The following is a 372-amino-acid chain: UDP-N-acetylglucosamine--N-acetylmuramyl-(pentapeptide) pyrophosphoryl-undecaprenol N-acetylglucosamine transferase (372 aa).

UDP-N-acetyl-alpha-D-glucosamine-binding positions include 16 to 18 (TGG), asparagine 128, arginine 164, serine 192, isoleucine 250, and glutamine 295.

It belongs to the glycosyltransferase 28 family. MurG subfamily.

Its subcellular location is the cell inner membrane. The enzyme catalyses di-trans,octa-cis-undecaprenyl diphospho-N-acetyl-alpha-D-muramoyl-L-alanyl-D-glutamyl-meso-2,6-diaminopimeloyl-D-alanyl-D-alanine + UDP-N-acetyl-alpha-D-glucosamine = di-trans,octa-cis-undecaprenyl diphospho-[N-acetyl-alpha-D-glucosaminyl-(1-&gt;4)]-N-acetyl-alpha-D-muramoyl-L-alanyl-D-glutamyl-meso-2,6-diaminopimeloyl-D-alanyl-D-alanine + UDP + H(+). It participates in cell wall biogenesis; peptidoglycan biosynthesis. Cell wall formation. Catalyzes the transfer of a GlcNAc subunit on undecaprenyl-pyrophosphoryl-MurNAc-pentapeptide (lipid intermediate I) to form undecaprenyl-pyrophosphoryl-MurNAc-(pentapeptide)GlcNAc (lipid intermediate II). The protein is UDP-N-acetylglucosamine--N-acetylmuramyl-(pentapeptide) pyrophosphoryl-undecaprenol N-acetylglucosamine transferase of Paraburkholderia xenovorans (strain LB400).